We begin with the raw amino-acid sequence, 685 residues long: MNTELVAMEPGVSRNGVRTETTTNPSLGLHTYDIVVVVIYFVFVLAVGIWSSIRASRGTVGGYFLAGRSMTWWPIGASLMSSNVGSGLFIGLAGTGAAGGLAVGGFEWNATFLLLALGWIFVPVYIAAGVVTMPQYLKKRFGGQRIQVYMSVLSLILYIFTKISTDIFSGALFIQMALGWNLYLSTVILLVVTAVYTIAGGLTAVIYTDALQTVIMVGGALVLMFLGFQEVGWYPGLQQLYRQAIPNTTVPNTTCHLPRPDAFHMLRDPVNGDIPWPGLIFGLTVLATWCWCTDQVIVQRSLAAKNLSHAKGGSVLGGYLKILPMFFIVMPGMISRALYPDEVACVDPDICQRVCGARVGCSNIAYPKLVMALMPVGLRGLMIAVIMAALMSSLTSIFNSSSTLFAIDVWQRFRRQASEQELMVVGRLFVVFLVVISILWIPIIQSSNSGQLFDYIQSITSYLAPPITALFLLAIFCKRVNEPGAFWGLMFGLVVGILRMILEFSYSAPACGEMDRRPAVLKDFHYLYFALLLCGLTAIIIVVISFFTEPIPDDKLARLTWWTRNCAVSDLQKKTSVSVNNTEDDNSPGLAGRPVVEGPAGDEEEANTTQGPEQPGALHRSWGKWLWNWFCGLSGAPQQALSPAEKAVLEQKLTSIEEEPLWRRVCNINAIILLAINIFLWGYFA.

Residues 1–20 are disordered; the sequence is MNTELVAMEPGVSRNGVRTE. Topologically, residues 1–32 are extracellular; sequence MNTELVAMEPGVSRNGVRTETTTNPSLGLHTY. A helical transmembrane segment spans residues 33 to 53; it reads DIVVVVIYFVFVLAVGIWSSI. Residues 54–71 lie on the Cytoplasmic side of the membrane; it reads RASRGTVGGYFLAGRSMT. The chain crosses the membrane as a helical span at residues 72 to 94; that stretch reads WWPIGASLMSSNVGSGLFIGLAG. Topologically, residues 95-110 are extracellular; sequence TGAAGGLAVGGFEWNA. Residues 111–131 form a helical membrane-spanning segment; the sequence is TFLLLALGWIFVPVYIAAGVV. The Cytoplasmic segment spans residues 132–153; it reads TMPQYLKKRFGGQRIQVYMSVL. Residues 154-174 form a helical membrane-spanning segment; sequence SLILYIFTKISTDIFSGALFI. At 175-186 the chain is on the extracellular side; sequence QMALGWNLYLST. The helical transmembrane segment at 187–207 threads the bilayer; the sequence is VILLVVTAVYTIAGGLTAVIY. The Cytoplasmic portion of the chain corresponds to 208-213; sequence TDALQT. The chain crosses the membrane as a helical span at residues 214–234; that stretch reads VIMVGGALVLMFLGFQEVGWY. Topologically, residues 235-271 are extracellular; that stretch reads PGLQQLYRQAIPNTTVPNTTCHLPRPDAFHMLRDPVN. Asn-247 carries an N-linked (GlcNAc...) asparagine glycan. Residues 272–292 traverse the membrane as a helical segment; it reads GDIPWPGLIFGLTVLATWCWC. Residues 293–313 are Cytoplasmic-facing; that stretch reads TDQVIVQRSLAAKNLSHAKGG. A helical membrane pass occupies residues 314–334; sequence SVLGGYLKILPMFFIVMPGMI. Over 335 to 379 the chain is Extracellular; sequence SRALYPDEVACVDPDICQRVCGARVGCSNIAYPKLVMALMPVGLR. A helical transmembrane segment spans residues 380-402; sequence GLMIAVIMAALMSSLTSIFNSSS. Residues 403–423 are Cytoplasmic-facing; sequence TLFAIDVWQRFRRQASEQELM. The helical transmembrane segment at 424–444 threads the bilayer; it reads VVGRLFVVFLVVISILWIPII. The Extracellular portion of the chain corresponds to 445–455; the sequence is QSSNSGQLFDY. The chain crosses the membrane as a helical span at residues 456-476; it reads IQSITSYLAPPITALFLLAIF. The Cytoplasmic portion of the chain corresponds to 477–483; that stretch reads CKRVNEP. A helical membrane pass occupies residues 484–504; the sequence is GAFWGLMFGLVVGILRMILEF. The Extracellular portion of the chain corresponds to 505–526; it reads SYSAPACGEMDRRPAVLKDFHY. Residues 527 to 547 form a helical membrane-spanning segment; it reads LYFALLLCGLTAIIIVVISFF. Over 548–664 the chain is Cytoplasmic; that stretch reads TEPIPDDKLA…SIEEEPLWRR (117 aa). Residues 577-616 are disordered; sequence VSVNNTEDDNSPGLAGRPVVEGPAGDEEEANTTQGPEQPG. A helical membrane pass occupies residues 665–685; sequence VCNINAIILLAINIFLWGYFA.

Belongs to the sodium:solute symporter (SSF) (TC 2.A.21) family.

Its subcellular location is the cell membrane. It catalyses the reaction D-mannose(out) + n Na(+)(out) = D-mannose(in) + n Na(+)(in). Electrogenic Na(+)-coupled sugar symporter that may play a primary role in D-mannose and possibly D-fructose and D-glucose transport at the plasma membrane. Transporter activity is driven by a transmembrane Na(+) electrochemical gradient set by the Na(+)/K(+) pump. Exclusively recognizes sugar substrates having a pyranose ring with an axial hydroxyl group on carbon 2. The protein is Sodium/glucose cotransporter 4 (Slc5a9) of Mus musculus (Mouse).